The chain runs to 493 residues: Galactose-1-phosphate uridylyltransferase (493 aa).

It belongs to the galactose-1-phosphate uridylyltransferase type 2 family.

Its subcellular location is the cytoplasm. It catalyses the reaction alpha-D-galactose 1-phosphate + UDP-alpha-D-glucose = alpha-D-glucose 1-phosphate + UDP-alpha-D-galactose. Its pathway is carbohydrate metabolism; galactose metabolism. This chain is Galactose-1-phosphate uridylyltransferase (galT), found in Streptococcus thermophilus.